A 437-amino-acid polypeptide reads, in one-letter code: Putative permease IIC component (437 aa).

The PTS EIIC type-2 domain maps to 2-437 (FDYILSLGGT…LFLRKRELSE (436 aa)). A run of 12 helical transmembrane segments spans residues 5-25 (ILSL…GLIF), 35-55 (AGVT…MAID), 88-108 (ATAI…AMLV), 134-154 (LMTG…ALSL), 173-193 (ISIP…LDAI), 215-235 (GMVG…GLAA), 236-256 (GEGF…MVLF), 302-322 (TIAV…ILPG), 325-345 (VLPL…TVIH), 354-374 (ISGV…APYF), 385-405 (FAGE…GWSI), and 410-430 (SLGI…VLFL).

It localises to the cell inner membrane. Its function is as follows. The phosphoenolpyruvate-dependent sugar phosphotransferase system (PTS), a major carbohydrate active -transport system, catalyzes the phosphorylation of incoming sugar substrates concomitant with their translocation across the cell membrane. The sequence is that of Putative permease IIC component (sgcC) from Escherichia coli (strain K12).